A 311-amino-acid chain; its full sequence is Cytochrome f (311 aa).

Positions 1–27 (MKHFFKSLTLAIALAASVLFWSPQAQA) are cleaved as a signal peptide. Heme-binding residues include Tyr-28, Cys-48, Cys-51, and His-52. A helical transmembrane segment spans residues 279-296 (WLLVFFAAITLSQILLVL).

Belongs to the cytochrome f family. In terms of assembly, the 4 large subunits of the cytochrome b6-f complex are cytochrome b6, subunit IV (17 kDa polypeptide, PetD), cytochrome f and the Rieske protein, while the 4 small subunits are PetG, PetL, PetM and PetN. The complex functions as a dimer. The cofactor is heme.

It is found in the cellular thylakoid membrane. In terms of biological role, component of the cytochrome b6-f complex, which mediates electron transfer between photosystem II (PSII) and photosystem I (PSI), cyclic electron flow around PSI, and state transitions. The polypeptide is Cytochrome f (Synechococcus elongatus).